A 366-amino-acid polypeptide reads, in one-letter code: Phospho-N-acetylmuramoyl-pentapeptide-transferase (366 aa).

10 helical membrane passes run 3 to 23 (QIFI…PVLI), 54 to 74 (GIAV…VGLV), 80 to 100 (PGVS…LGFA), 120 to 140 (LVGQ…FPNA), 161 to 181 (IAIG…YLVI), 197 to 217 (LASG…FWQF), 238 to 258 (LSML…WNAA), 262 to 282 (IFMG…LSVT), 288 to 308 (LMIL…IQVV), and 341 to 361 (FWLL…AEWL).

It belongs to the glycosyltransferase 4 family. MraY subfamily. It depends on Mg(2+) as a cofactor.

The protein localises to the cell membrane. The catalysed reaction is UDP-N-acetyl-alpha-D-muramoyl-L-alanyl-gamma-D-glutamyl-meso-2,6-diaminopimeloyl-D-alanyl-D-alanine + di-trans,octa-cis-undecaprenyl phosphate = di-trans,octa-cis-undecaprenyl diphospho-N-acetyl-alpha-D-muramoyl-L-alanyl-D-glutamyl-meso-2,6-diaminopimeloyl-D-alanyl-D-alanine + UMP. The protein operates within cell wall biogenesis; peptidoglycan biosynthesis. In terms of biological role, catalyzes the initial step of the lipid cycle reactions in the biosynthesis of the cell wall peptidoglycan: transfers peptidoglycan precursor phospho-MurNAc-pentapeptide from UDP-MurNAc-pentapeptide onto the lipid carrier undecaprenyl phosphate, yielding undecaprenyl-pyrophosphoryl-MurNAc-pentapeptide, known as lipid I. This is Phospho-N-acetylmuramoyl-pentapeptide-transferase from Corynebacterium jeikeium (strain K411).